A 186-amino-acid polypeptide reads, in one-letter code: Ribosome-recycling factor (186 aa).

A disordered region spans residues 135-164 (DGMDDLKKAEKDGEIGQDESRAQSERVQKM).

This sequence belongs to the RRF family.

It is found in the cytoplasm. Functionally, responsible for the release of ribosomes from messenger RNA at the termination of protein biosynthesis. May increase the efficiency of translation by recycling ribosomes from one round of translation to another. In Sinorhizobium medicae (strain WSM419) (Ensifer medicae), this protein is Ribosome-recycling factor.